A 383-amino-acid polypeptide reads, in one-letter code: Centractin (383 aa).

The disordered stretch occupies residues 227 to 246 (PQKEEELLEPDSSSSKPVQP).

It belongs to the actin family. ARP1 subfamily.

It is found in the cytoplasm. It localises to the cytoskeleton. The protein localises to the microtubule organizing center. The protein resides in the centrosome. In terms of biological role, component of a multi-subunit complex, PPK2 (poly P kinase complex 2) involved in microtubule based vesicle motility. It is associated with the centrosome. PPK2 complex can synthesize a poly chain of hundreds of phosphate residues linked by ATP-like bonds. The sequence is that of Centractin (arpA) from Dictyostelium discoideum (Social amoeba).